The primary structure comprises 429 residues: Alpha-galactosidase A (429 aa).

The signal sequence occupies residues 1-31 (MQLRNPELHLGCALALRFLALVSWDIPGARA). 2 disulfides stabilise this stretch: cysteine 52/cysteine 94 and cysteine 56/cysteine 63. The N-linked (GlcNAc...) asparagine glycan is linked to asparagine 139. Cysteines 142 and 172 form a disulfide. The Nucleophile role is filled by aspartate 170. N-linked (GlcNAc...) asparagine glycosylation is present at asparagine 192. A disulfide bridge connects residues cysteine 202 and cysteine 223. 203 to 207 (EWPLY) lines the substrate pocket. A glycan (N-linked (GlcNAc...) asparagine) is linked at asparagine 215. Residue aspartate 231 is the Proton donor of the active site. A disulfide bridge links cysteine 378 with cysteine 382.

It belongs to the glycosyl hydrolase 27 family. As to quaternary structure, homodimer.

It is found in the lysosome. It catalyses the reaction Hydrolysis of terminal, non-reducing alpha-D-galactose residues in alpha-D-galactosides, including galactose oligosaccharides, galactomannans and galactolipids.. The enzyme catalyses a globoside Gb3Cer (d18:1(4E)) + H2O = a beta-D-Gal-(1-&gt;4)-beta-D-Glc-(1&lt;-&gt;1)-Cer(d18:1(4E)) + D-galactose. It carries out the reaction a globoside Gb3Cer + H2O = a beta-D-galactosyl-(1-&gt;4)-beta-D-glucosyl-(1&lt;-&gt;1)-ceramide + D-galactose. With respect to regulation, galactosylgalactosylglucosylceramidase activity is stimulated by saposin B and ammonium chloride. Its function is as follows. Catalyzes the hydrolysis of glycosphingolipids and participates in their degradation in the lysosome. This Homo sapiens (Human) protein is Alpha-galactosidase A.